Here is a 697-residue protein sequence, read N- to C-terminus: Lebercilin (697 aa).

Residues 1–90 (MGERAGSPGT…VGFRSQSLNR (90 aa)) form a disordered region. A phosphoserine mark is found at Ser-7 and Ser-45. Over residues 32 to 45 (SSGRSSLVSSSPAS) the composition is skewed to low complexity. Coiled-coil stretches lie at residues 103–297 (RILS…IKNI) and 389–485 (EEKF…RNLK). 3 disordered regions span residues 412-432 (WEREELDKKQKEKASLLEREE), 522-548 (HHLQDISFSTPKGEGQNSGNVRSPASP), and 606-697 (EQLF…VALR). Basic and acidic residues predominate over residues 416 to 432 (ELDKKQKEKASLLEREE). The span at 527–547 (ISFSTPKGEGQNSGNVRSPAS) shows a compositional bias: polar residues. Residues 612–626 (SGSSTISSKSSDPNS) are compositionally biased toward low complexity. A compositionally biased stretch (acidic residues) spans 686–697 (SVEDEIEEVALR).

Belongs to the LCA5 family. In terms of assembly, interacts with NINL. Interacts with OFD1. Interacts with FAM161A. Interacts with components of the IFT complex B. As to expression, widely expressed.

It is found in the cytoplasm. Its subcellular location is the cytoskeleton. The protein resides in the cilium axoneme. The protein localises to the cilium basal body. It localises to the microtubule organizing center. It is found in the centrosome. Its subcellular location is the cell projection. The protein resides in the cilium. Involved in intraflagellar protein (IFT) transport in photoreceptor cilia. This chain is Lebercilin (LCA5), found in Homo sapiens (Human).